A 118-amino-acid chain; its full sequence is Cell division protein FtsB (118 aa).

Over methionine 1–tryptophan 6 the chain is Cytoplasmic. The chain crosses the membrane as a helical span at residues leucine 7–phenylalanine 24. Residues glycine 25–arginine 118 are Periplasmic-facing. Residues glycine 30–glycine 66 are a coiled coil. Positions proline 97–arginine 118 are disordered. The segment covering serine 103–arginine 118 has biased composition (basic and acidic residues).

It belongs to the FtsB family. Part of a complex composed of FtsB, FtsL and FtsQ.

It is found in the cell inner membrane. Essential cell division protein. May link together the upstream cell division proteins, which are predominantly cytoplasmic, with the downstream cell division proteins, which are predominantly periplasmic. This is Cell division protein FtsB from Xylella fastidiosa (strain 9a5c).